The chain runs to 142 residues: Multiprotein-bridging factor 1a (142 aa).

The segment covering 51-64 (GTNKAASSGTSLNT) has biased composition (polar residues). The disordered stretch occupies residues 51–77 (GTNKAASSGTSLNTKMLDDDTENLTHE). The region spanning 87–141 (IMQARTDKKLTQSQLAQIINEKPQVIQEYESGKAIPNQQILSKLERALGAKLRGK) is the HTH cro/C1-type domain. Residues 98–117 (QSQLAQIINEKPQVIQEYES) constitute a DNA-binding region (H-T-H motif).

Belongs to the MBF1 family. In terms of tissue distribution, expressed in leaves, roots, stems, flowers, siliques and shoots. Detected only in anthers and some seeds in siliques.

The protein localises to the nucleus. Its subcellular location is the nucleolus. Functionally, transcriptional coactivator that stimulates transcriptional activity by bridging regulatory proteins and TBP, thereby recruiting TBP to promoters occupied by DNA-binding regulators. This Arabidopsis thaliana (Mouse-ear cress) protein is Multiprotein-bridging factor 1a (MBF1A).